A 127-amino-acid chain; its full sequence is MAKPTRKRRVKKNIESGIAHIHATFNNTIVMITDVHGNALAWSSAGALGFKGSRKSTPFAAQMAAEAAAKSAQEHGLKTVEVTVKGPGSGRESAIRALAAAGLEVTSIRDVTPVPHNGARPPKRRRV.

Belongs to the universal ribosomal protein uS11 family. In terms of assembly, part of the 30S ribosomal subunit. Interacts with proteins S7 and S18. Binds to IF-3.

Its function is as follows. Located on the platform of the 30S subunit, it bridges several disparate RNA helices of the 16S rRNA. Forms part of the Shine-Dalgarno cleft in the 70S ribosome. The chain is Small ribosomal subunit protein uS11 from Streptococcus mutans serotype c (strain ATCC 700610 / UA159).